We begin with the raw amino-acid sequence, 297 residues long: GTPase Era (297 aa).

The Era-type G domain occupies 5-173; that stretch reads RAGFVSFVGR…TTELMRLLPV (169 aa). A G1 region spans residues 13 to 20; that stretch reads GRPNVGKS. 13-20 lines the GTP pocket; it reads GRPNVGKS. A G2 region spans residues 39–43; the sequence is QTTRR. The G3 stretch occupies residues 60–63; sequence DTPG. GTP contacts are provided by residues 60–64 and 123–126; these read DTPGV and TKID. Residues 123–126 form a G4 region; it reads TKID. Residues 152 to 154 are G5; sequence VSA. A KH type-2 domain is found at 205 to 283; sequence VEDELPHSLA…FLSIRVKVAK (79 aa).

The protein belongs to the TRAFAC class TrmE-Era-EngA-EngB-Septin-like GTPase superfamily. Era GTPase family. In terms of assembly, monomer.

It localises to the cytoplasm. It is found in the cell membrane. Functionally, an essential GTPase that binds both GDP and GTP, with rapid nucleotide exchange. Plays a role in 16S rRNA processing and 30S ribosomal subunit biogenesis and possibly also in cell cycle regulation and energy metabolism. The protein is GTPase Era of Leifsonia xyli subsp. xyli (strain CTCB07).